The primary structure comprises 284 residues: 2-dehydro-3-deoxyphosphooctonate aldolase (284 aa).

The protein belongs to the KdsA family.

The protein resides in the cytoplasm. It catalyses the reaction D-arabinose 5-phosphate + phosphoenolpyruvate + H2O = 3-deoxy-alpha-D-manno-2-octulosonate-8-phosphate + phosphate. It functions in the pathway carbohydrate biosynthesis; 3-deoxy-D-manno-octulosonate biosynthesis; 3-deoxy-D-manno-octulosonate from D-ribulose 5-phosphate: step 2/3. Its pathway is bacterial outer membrane biogenesis; lipopolysaccharide biosynthesis. This Escherichia coli O6:K15:H31 (strain 536 / UPEC) protein is 2-dehydro-3-deoxyphosphooctonate aldolase.